The following is a 103-amino-acid chain: Co-chaperonin GroES (103 aa).

This sequence belongs to the GroES chaperonin family. Heptamer of 7 subunits arranged in a ring. Interacts with the chaperonin GroEL.

It is found in the cytoplasm. Functionally, together with the chaperonin GroEL, plays an essential role in assisting protein folding. The GroEL-GroES system forms a nano-cage that allows encapsulation of the non-native substrate proteins and provides a physical environment optimized to promote and accelerate protein folding. GroES binds to the apical surface of the GroEL ring, thereby capping the opening of the GroEL channel. The chain is Co-chaperonin GroES from Synechococcus sp. (strain WH7803).